Reading from the N-terminus, the 1058-residue chain is Carbamoyl phosphate synthase large chain (1058 aa).

Residues 1 to 401 (MPKRKDIQKI…SLLKACRSLE (401 aa)) are carboxyphosphate synthetic domain. Residues Arg-129, Arg-169, Gly-175, Gly-176, Arg-208, Ile-210, Glu-215, Gly-241, Ile-242, His-243, Gln-284, and Glu-298 each contribute to the ATP site. The ATP-grasp 1 domain maps to 133 to 327 (KQLMQELDQP…IAKLAAKIAV (195 aa)). Positions 284, 298, and 300 each coordinate Mg(2+). Positions 284, 298, and 300 each coordinate Mn(2+). The interval 402-546 (IGVCHNEMTS…YSTYELENES (145 aa)) is oligomerization domain. Positions 547 to 929 (VQSNKESILV…ALYKAFEANN (383 aa)) are carbamoyl phosphate synthetic domain. An ATP-grasp 2 domain is found at 671-861 (EKALKELGIP…MAQIATKLIL (191 aa)). Residues Arg-707, Ser-746, Ile-748, Glu-752, Gly-777, Val-778, His-779, Ser-780, Gln-820, and Glu-832 each contribute to the ATP site. Positions 820, 832, and 834 each coordinate Mg(2+). Positions 820, 832, and 834 each coordinate Mn(2+). The MGS-like domain occupies 930–1058 (SHLSEFGQIV…ESRCFNIEAI (129 aa)). An allosteric domain region spans residues 930–1058 (SHLSEFGQIV…ESRCFNIEAI (129 aa)).

It belongs to the CarB family. In terms of assembly, composed of two chains; the small (or glutamine) chain promotes the hydrolysis of glutamine to ammonia, which is used by the large (or ammonia) chain to synthesize carbamoyl phosphate. Tetramer of heterodimers (alpha,beta)4. The cofactor is Mg(2+). Mn(2+) is required as a cofactor.

It carries out the reaction hydrogencarbonate + L-glutamine + 2 ATP + H2O = carbamoyl phosphate + L-glutamate + 2 ADP + phosphate + 2 H(+). The enzyme catalyses hydrogencarbonate + NH4(+) + 2 ATP = carbamoyl phosphate + 2 ADP + phosphate + 2 H(+). Its pathway is amino-acid biosynthesis; L-arginine biosynthesis; carbamoyl phosphate from bicarbonate: step 1/1. It participates in pyrimidine metabolism; UMP biosynthesis via de novo pathway; (S)-dihydroorotate from bicarbonate: step 1/3. Functionally, large subunit of the glutamine-dependent carbamoyl phosphate synthetase (CPSase). CPSase catalyzes the formation of carbamoyl phosphate from the ammonia moiety of glutamine, carbonate, and phosphate donated by ATP, constituting the first step of 2 biosynthetic pathways, one leading to arginine and/or urea and the other to pyrimidine nucleotides. The large subunit (synthetase) binds the substrates ammonia (free or transferred from glutamine from the small subunit), hydrogencarbonate and ATP and carries out an ATP-coupled ligase reaction, activating hydrogencarbonate by forming carboxy phosphate which reacts with ammonia to form carbamoyl phosphate. This is Carbamoyl phosphate synthase large chain from Streptococcus pyogenes serotype M18 (strain MGAS8232).